We begin with the raw amino-acid sequence, 386 residues long: uncharacterized protein (386 aa).

The F-box domain maps to 29 to 76 (KYWKFLNEDCKIEVLKYLDYCSRCQLSICSKSDHKLVSITPLYVYEIE).

This is an uncharacterized protein from Caenorhabditis elegans.